The primary structure comprises 338 residues: Fructose-1,6-bisphosphatase class 1 1 (338 aa).

Positions 91, 113, 115, and 116 each coordinate Mg(2+). Residues 116–119 (DGSS), Asn208, and Lys274 each bind substrate. Residue Glu280 coordinates Mg(2+).

This sequence belongs to the FBPase class 1 family. Homotetramer. Mg(2+) serves as cofactor.

The protein resides in the cytoplasm. It carries out the reaction beta-D-fructose 1,6-bisphosphate + H2O = beta-D-fructose 6-phosphate + phosphate. It functions in the pathway carbohydrate biosynthesis; gluconeogenesis. The sequence is that of Fructose-1,6-bisphosphatase class 1 1 from Cupriavidus metallidurans (strain ATCC 43123 / DSM 2839 / NBRC 102507 / CH34) (Ralstonia metallidurans).